Reading from the N-terminus, the 155-residue chain is Ribosome maturation factor RimP (155 aa).

This sequence belongs to the RimP family.

The protein localises to the cytoplasm. Required for maturation of 30S ribosomal subunits. The sequence is that of Ribosome maturation factor RimP from Parasynechococcus marenigrum (strain WH8102).